Consider the following 571-residue polypeptide: Double-stranded RNA-binding protein Staufen homolog 2 (571 aa).

The region spanning 8–75 is the DRBM 1 domain; that stretch reads TPMCLVNELA…ANKALTESTL (68 aa). 2 positions are modified to phosphoserine: Pro9 and Val13. Position 18 is a phosphothreonine (Arg18). At Ser21 the chain carries Phosphoserine. 2 disordered regions span residues 71–94 and 178–203; these read TEST…PGSI and ALQN…DDKD. The segment covering 83–94 has biased composition (polar residues); it reads PKSNVNNNPGSI. The region spanning 95–181 is the DRBM 2 domain; the sequence is TPTVELNGLA…AMKALQALQN (87 aa). Ser188 carries the phosphoserine modification. Residues 194-203 are compositionally biased toward basic and acidic residues; the sequence is SGKEMDDDKD. 2 consecutive DRBM domains span residues 207–274 and 307–375; these read SEIS…ELKK and NPIS…QLGY. 2 consecutive short sequence motifs (nuclear localization signal) follow at residues 273–317 and 373–412; these read KKLP…QIQQ and LGYK…PKGI. Positions 381–571 are required for dendritic transport; the sequence is LQDQLDKTGE…QDCKKSKSVI (191 aa). Residues 382 to 413 are disordered; it reads QDQLDKTGENKGWSGPKPGFPEPANNTPKGIL. Phosphoserine is present on residues Ser395, Ser416, Ser426, Ser440, Ser456, and Ser493. A disordered region spans residues 546–571; it reads LREKADNNQANPGSITQDCKKSKSVI. Positions 552 to 562 are enriched in polar residues; that stretch reads NNQANPGSITQ.

As to quaternary structure, identified in a mRNP complex, at least composed of DHX9, DDX3X, ELAVL1, HNRNPU, IGF2BP1, ILF3, PABPC1, PCBP2, PTBP2, STAU1, STAU2, SYNCRIP and YBX1. Interacts with the exportin XPO5. This requires RNA and RAN bound to GTP. Interacts with microtubules. Isoform 2 and isoform 3 may also interact with ribosomes, and this association is independent of translation. Interacts with TRIM71 (via NHL repeats) in an RNA-dependent manner. In terms of tissue distribution, expressed in both somata and dendrites of hippocampal neurons.

Its subcellular location is the nucleus. The protein localises to the nucleolus. It is found in the cytoplasm. The protein resides in the endoplasmic reticulum. In terms of biological role, RNA-binding protein required for the microtubule-dependent transport of neuronal RNA from the cell body to the dendrite. As protein synthesis occurs within the dendrite, the localization of specific mRNAs to dendrites may be a prerequisite for neurite outgrowth and plasticity at sites distant from the cell body. The polypeptide is Double-stranded RNA-binding protein Staufen homolog 2 (Stau2) (Rattus norvegicus (Rat)).